A 458-amino-acid chain; its full sequence is Na(+)/H(+) antiporter NhaA (458 aa).

Transmembrane regions (helical) follow at residues phenylalanine 27–isoleucine 47, leucine 78–isoleucine 98, isoleucine 114–phenylalanine 134, glycine 143–glycine 163, valine 172–phenylalanine 192, glycine 201–alanine 221, serine 222–valine 242, valine 249–isoleucine 269, proline 316–alanine 336, phenylalanine 346–threonine 366, isoleucine 388–leucine 408, and isoleucine 421–tyrosine 441.

This sequence belongs to the NhaA Na(+)/H(+) (TC 2.A.33) antiporter family.

The protein resides in the cell inner membrane. The catalysed reaction is Na(+)(in) + 2 H(+)(out) = Na(+)(out) + 2 H(+)(in). Na(+)/H(+) antiporter that extrudes sodium in exchange for external protons. This chain is Na(+)/H(+) antiporter NhaA, found in Bartonella quintana (strain Toulouse) (Rochalimaea quintana).